A 98-amino-acid chain; its full sequence is DNA-directed RNA polymerase subunit Rpo11 (98 aa).

This sequence belongs to the archaeal Rpo11/eukaryotic RPB11/RPC19 RNA polymerase subunit family. Part of the RNA polymerase complex.

The protein resides in the cytoplasm. The catalysed reaction is RNA(n) + a ribonucleoside 5'-triphosphate = RNA(n+1) + diphosphate. Functionally, DNA-dependent RNA polymerase (RNAP) catalyzes the transcription of DNA into RNA using the four ribonucleoside triphosphates as substrates. This chain is DNA-directed RNA polymerase subunit Rpo11, found in Korarchaeum cryptofilum (strain OPF8).